Consider the following 213-residue polypeptide: Sclerostin (213 aa).

An N-terminal signal peptide occupies residues M1–G23. Positions G41–E71 are disordered. N53 carries an N-linked (GlcNAc...) asparagine glycan. 4 disulfide bridges follow: C80–C134, C94–C148, C105–C165, and C109–C167. The region spanning E82–R172 is the CTCK domain. N-linked (GlcNAc...) asparagine glycosylation occurs at N175. The interval E178–Y213 is disordered. Basic residues predominate over residues Q190–G201.

It belongs to the sclerostin family. As to quaternary structure, interacts with LRP4 (via the extracellular domain); the interaction facilitates the inhibition of Wnt signaling. Interacts with LRP5 (via the first two YWTD-EGF repeat domains); the interaction inhibits Wnt-mediated signaling. Interacts with LRP6.

The protein localises to the secreted. It is found in the extracellular space. It localises to the extracellular matrix. Functionally, negative regulator of bone growth that acts through inhibition of Wnt signaling and bone formation. In Chlorocebus aethiops (Green monkey), this protein is Sclerostin.